A 93-amino-acid chain; its full sequence is Small integral membrane protein 36 (93 aa).

A helical membrane pass occupies residues 14–34; sequence LIILVASYVILLLVFLISCVL. The interval 73–93 is disordered; the sequence is PKGPGLSLGDPAPLGKKSTMV.

It localises to the membrane. The chain is Small integral membrane protein 36 from Homo sapiens (Human).